A 387-amino-acid polypeptide reads, in one-letter code: Chaperone protein DnaJ (387 aa).

The J domain maps to 4–68 (DFYDVLGVSR…EKRQMYDQLG (65 aa)). The disordered stretch occupies residues 76-135 (EKRGGVGGGGNSSGGSARGDPFGGMGGQGSPFGDIFEQFFGGGQGQRRQGNRPRQGQNLQ). The segment covering 80–105 (GVGGGGNSSGGSARGDPFGGMGGQGS) has biased composition (gly residues). A compositionally biased stretch (low complexity) spans 121–133 (QRRQGNRPRQGQN). Residues 148-230 (GVEKQFTVRR…CNGDGVTRQE (83 aa)) form a CR-type zinc finger. Zn(2+) contacts are provided by cysteine 161, cysteine 164, cysteine 178, cysteine 181, cysteine 204, cysteine 207, cysteine 218, and cysteine 221. 4 CXXCXGXG motif repeats span residues 161–168 (CPDCNGRG), 178–185 (CPQCNGQG), 204–211 (CPRCDGSG), and 218–225 (CSTCNGDG).

The protein belongs to the DnaJ family. In terms of assembly, homodimer. Requires Zn(2+) as cofactor.

It is found in the cytoplasm. In terms of biological role, participates actively in the response to hyperosmotic and heat shock by preventing the aggregation of stress-denatured proteins and by disaggregating proteins, also in an autonomous, DnaK-independent fashion. Unfolded proteins bind initially to DnaJ; upon interaction with the DnaJ-bound protein, DnaK hydrolyzes its bound ATP, resulting in the formation of a stable complex. GrpE releases ADP from DnaK; ATP binding to DnaK triggers the release of the substrate protein, thus completing the reaction cycle. Several rounds of ATP-dependent interactions between DnaJ, DnaK and GrpE are required for fully efficient folding. Also involved, together with DnaK and GrpE, in the DNA replication of plasmids through activation of initiation proteins. The sequence is that of Chaperone protein DnaJ from Haloquadratum walsbyi (strain DSM 16790 / HBSQ001).